The primary structure comprises 622 residues: 1-deoxy-D-xylulose-5-phosphate synthase (622 aa).

Thiamine diphosphate is bound by residues His-80 and 121–123 (GHS). Asp-152 serves as a coordination point for Mg(2+). Thiamine diphosphate-binding positions include 153 to 154 (GA), Asn-181, Tyr-288, and Glu-370. Asn-181 provides a ligand contact to Mg(2+).

It belongs to the transketolase family. DXPS subfamily. Homodimer. Mg(2+) serves as cofactor. The cofactor is thiamine diphosphate.

The catalysed reaction is D-glyceraldehyde 3-phosphate + pyruvate + H(+) = 1-deoxy-D-xylulose 5-phosphate + CO2. It participates in metabolic intermediate biosynthesis; 1-deoxy-D-xylulose 5-phosphate biosynthesis; 1-deoxy-D-xylulose 5-phosphate from D-glyceraldehyde 3-phosphate and pyruvate: step 1/1. In terms of biological role, catalyzes the acyloin condensation reaction between C atoms 2 and 3 of pyruvate and glyceraldehyde 3-phosphate to yield 1-deoxy-D-xylulose-5-phosphate (DXP). This chain is 1-deoxy-D-xylulose-5-phosphate synthase, found in Shewanella baltica (strain OS155 / ATCC BAA-1091).